Reading from the N-terminus, the 122-residue chain is MDEEHNIIMVTTNYIPGKKITRIIGTIWGITVRSRGLGGNIVAGLRSLAGGEIKEYSKMLSDTRNTAMERLRDAAEQVGANAVIELRFDSSDIGQVMTEIVAYGTAVVVEDVSSDIQRVGLS.

This sequence belongs to the UPF0145 family.

This is UPF0145 protein TV0671 from Thermoplasma volcanium (strain ATCC 51530 / DSM 4299 / JCM 9571 / NBRC 15438 / GSS1).